A 375-amino-acid chain; its full sequence is Porin Omp2b (375 aa).

Positions 1–22 (MNIKSLLLGSAAALVAASGAQA) are cleaved as a signal peptide.

This sequence belongs to the alphaproteobacteria porin family. In terms of assembly, homotrimer.

The protein localises to the cell outer membrane. In terms of biological role, forms passive diffusion pores that allow small molecular weight hydrophilic materials across the outer membrane. The sequence is that of Porin Omp2b (omp2b) from Brucella suis.